Here is a 198-residue protein sequence, read N- to C-terminus: Transcription factor IND (198 aa).

Residues 1–33 (MENGMYKKKGVCDSCVSSKSRSNHSPKRSMMEP) are disordered. Positions 118-167 (ISDDPQTVVARRRRERISEKIRILKRIVPGGAKMDTASMLDEAIRYTKFL) constitute a bHLH domain.

As to quaternary structure, homodimer. Heterodimer; possibly with ALC. In terms of tissue distribution, after fertilization, it is expressed in stripes about four cells wide at the margins of developing wild-type fruit. Also expressed in the inner valve layer, which becomes lignified later in fruit development. Detected in roots.

It localises to the nucleus. Transcription regulator required for seed dispersal. Involved in the differentiation of all three cell types required for fruit dehiscence. Acts as the key regulator in a network including SHP and ALC that controls specification of the valve margin. Works with ALC, SHP, and FUL to allow differentiation of the lignified valve layer, the spring-loaded mechanism of fruit that promotes opening. Regulates the expression of the YJ80 marker. This is Transcription factor IND (IND) from Arabidopsis thaliana (Mouse-ear cress).